A 704-amino-acid polypeptide reads, in one-letter code: MQDERPVDQLTEAEAATELARLAEAIEAANTAYHTHDAPQISDADYDALKLRNRAIEEQFPELRRSDSPSDRVGGALAEGFAKVRHEVRMLSLENAFDLAEVEDWIERIRRYLGHVGDLLFTAEPKIDGLSLSLRYEKGRLVQAATRGDGETGENVTENARTIADLPTELDGAPDLLEVRGEVYMSHEDFAALNGRQEAAGQRLFANPRNAAAGSLRQLDPAVTASRPLRFFAYAWGAHSEPLAATQHEAIARLAALGFATNPLTRLCTGPEELLAQHAEIERQRAALGYDIDGVVYKVDDLALQRRLGFRASTPRWAIAHKFAAQLAWTQLEGIDIQVGRTGALSPVARLKPVTVGGVVVANATLHNEDYIAGRDSKGQEIRGGKDIRVGDWVQVYRAGDVIPKVADVDLDRRPEGAARYRFPETCPECGSEAIREPGDSVRRCTGGLICPAQQVERLKHFVSRAAFDIEGLGAKQVEALWRDGWIRQPADIFELPNRYREGIQRLENREGWGRKSAENLFAAIEARRRIALHRLIFALGIRHVGETTATLLATHYGSWAAFEAAMTRAEVGAGPEWQDLLSIDGVGAVLATSLVTAFHQEAERAAVDALAAHLTVEDAEVRAPVASPVAGKIVVFTGTLEKMSRAEAKARAEALGAKVSGSVSARTDVVVAGPGAGSKAKQAAALGIETIDEDGWLRLIGDA.

NAD(+) contacts are provided by residues 43-47, 92-93, and Glu124; these read DADYD and SL. Residue Lys126 is the N6-AMP-lysine intermediate of the active site. Residues Arg147, Glu182, Lys298, and Lys322 each contribute to the NAD(+) site. Zn(2+) is bound by residues Cys427, Cys430, Cys445, and Cys451. The region spanning 625 to 704 is the BRCT domain; the sequence is PVASPVAGKI…DGWLRLIGDA (80 aa).

The protein belongs to the NAD-dependent DNA ligase family. LigA subfamily. It depends on Mg(2+) as a cofactor. Requires Mn(2+) as cofactor.

The catalysed reaction is NAD(+) + (deoxyribonucleotide)n-3'-hydroxyl + 5'-phospho-(deoxyribonucleotide)m = (deoxyribonucleotide)n+m + AMP + beta-nicotinamide D-nucleotide.. Functionally, DNA ligase that catalyzes the formation of phosphodiester linkages between 5'-phosphoryl and 3'-hydroxyl groups in double-stranded DNA using NAD as a coenzyme and as the energy source for the reaction. It is essential for DNA replication and repair of damaged DNA. This Cereibacter sphaeroides (strain ATCC 17029 / ATH 2.4.9) (Rhodobacter sphaeroides) protein is DNA ligase.